The following is a 268-amino-acid chain: Kynurenine formamidase (268 aa).

The short motif at 33–37 (HGGGW) is the HGGXW element. The active-site Nucleophile is the S107. Catalysis depends on residues D219 and H251.

The protein belongs to the kynurenine formamidase family. In terms of assembly, homodimer.

It catalyses the reaction N-formyl-L-kynurenine + H2O = L-kynurenine + formate + H(+). It functions in the pathway amino-acid degradation; L-tryptophan degradation via kynurenine pathway; L-kynurenine from L-tryptophan: step 2/2. Its function is as follows. Catalyzes the hydrolysis of N-formyl-L-kynurenine to L-kynurenine, the second step in the kynurenine pathway of tryptophan degradation. Kynurenine may be further oxidized to nicotinic acid, NAD(H) and NADP(H). Required for elimination of toxic metabolites. This Scheffersomyces stipitis (strain ATCC 58785 / CBS 6054 / NBRC 10063 / NRRL Y-11545) (Yeast) protein is Kynurenine formamidase.